The primary structure comprises 179 residues: Large ribosomal subunit protein bL17 (179 aa).

The tract at residues 127 to 179 (TDTLPDTVIDTGPDSAPDPVPGSEPGSAAGDLPDADTAPADPGESSSNQRVIR) is disordered. Residues 154-168 (AAGDLPDADTAPADP) are compositionally biased toward low complexity. The span at 170–179 (ESSSNQRVIR) shows a compositional bias: polar residues.

This sequence belongs to the bacterial ribosomal protein bL17 family. Part of the 50S ribosomal subunit. Contacts protein L32.

The polypeptide is Large ribosomal subunit protein bL17 (Tropheryma whipplei (strain TW08/27) (Whipple's bacillus)).